The following is a 475-amino-acid chain: Ribulose bisphosphate carboxylase large chain (475 aa).

Positions methionine 1–serine 2 are excised as a propeptide. An N-acetylproline modification is found at proline 3. Lysine 14 is modified (N6,N6,N6-trimethyllysine). Substrate is bound by residues asparagine 123 and threonine 173. The active-site Proton acceptor is lysine 175. Position 177 (lysine 177) interacts with substrate. Residues lysine 201, aspartate 203, and glutamate 204 each coordinate Mg(2+). At lysine 201 the chain carries N6-carboxylysine. The active-site Proton acceptor is the histidine 294. Substrate contacts are provided by arginine 295, histidine 327, and serine 379.

This sequence belongs to the RuBisCO large chain family. Type I subfamily. Heterohexadecamer of 8 large chains and 8 small chains; disulfide-linked. The disulfide link is formed within the large subunit homodimers. Requires Mg(2+) as cofactor. In terms of processing, the disulfide bond which can form in the large chain dimeric partners within the hexadecamer appears to be associated with oxidative stress and protein turnover.

The protein resides in the plastid. It localises to the chloroplast. The catalysed reaction is 2 (2R)-3-phosphoglycerate + 2 H(+) = D-ribulose 1,5-bisphosphate + CO2 + H2O. The enzyme catalyses D-ribulose 1,5-bisphosphate + O2 = 2-phosphoglycolate + (2R)-3-phosphoglycerate + 2 H(+). Its function is as follows. RuBisCO catalyzes two reactions: the carboxylation of D-ribulose 1,5-bisphosphate, the primary event in carbon dioxide fixation, as well as the oxidative fragmentation of the pentose substrate in the photorespiration process. Both reactions occur simultaneously and in competition at the same active site. In Amaranthus tricolor (Joseph's coat), this protein is Ribulose bisphosphate carboxylase large chain.